The chain runs to 340 residues: Adenine deaminase (340 aa).

H17, H19, and H197 together coordinate Zn(2+). Catalysis depends on E200, which acts as the Proton donor. D278 contributes to the Zn(2+) binding site. Residue D279 coordinates substrate.

Belongs to the metallo-dependent hydrolases superfamily. Adenosine and AMP deaminases family. Adenine deaminase type 2 subfamily. Zn(2+) serves as cofactor.

It catalyses the reaction adenine + H2O + H(+) = hypoxanthine + NH4(+). In terms of biological role, catalyzes the hydrolytic deamination of adenine to hypoxanthine. Plays an important role in the purine salvage pathway and in nitrogen catabolism. The protein is Adenine deaminase of Streptomyces coelicolor (strain ATCC BAA-471 / A3(2) / M145).